A 336-amino-acid polypeptide reads, in one-letter code: Structure-specific endonuclease subunit SLX1 (336 aa).

The 84-residue stretch at 21-104 folds into the GIY-YIG domain; sequence SFYGVYLLQS…QHCHETRHIK (84 aa). Residues 37–57 form a disordered region; it reads FYIGSTPDPPRRLRQHNGDLK. An SLX1-type zinc finger spans residues 214-290; that stretch reads CALCLEPIEQ…PATVNRCCSC (77 aa).

The protein belongs to the SLX1 family. As to quaternary structure, forms a heterodimer with SLX4. Requires a divalent metal cation as cofactor.

The protein resides in the nucleus. Catalytic subunit of the SLX1-SLX4 structure-specific endonuclease that resolves DNA secondary structures generated during DNA repair and recombination. Has endonuclease activity towards branched DNA substrates, introducing single-strand cuts in duplex DNA close to junctions with ss-DNA. This is Structure-specific endonuclease subunit SLX1 from Scheffersomyces stipitis (strain ATCC 58785 / CBS 6054 / NBRC 10063 / NRRL Y-11545) (Yeast).